Here is a 252-residue protein sequence, read N- to C-terminus: Major prion protein (252 aa).

The first 22 residues, 1–22 (MANLGCWMLFLFVATWSDLGLC), serve as a signal peptide directing secretion. Residues 23-38 (KKRPKPGGWNTGGSRY) form an interaction with ADGRG6 region. The interaction with GRB2, ERI3 and SYN1 stretch occupies residues 23-229 (KKRPKPGGWN…ESQAYYQRGS (207 aa)). Residues 26-106 (PKPGGWNTGG…QWNKPSKPKT (81 aa)) are disordered. 5 repeat units span residues 51–58 (PQGGGWGQ), 59–66 (PHGGGWGQ), 67–74 (PHGGGWGQ), 75–82 (PHGGGWGQ), and 83–90 (PHGGGWGQ). The interval 51–90 (PQGGGWGQPHGGGWGQPHGGGWGQPHGGGWGQPHGGGWGQ) is 5 X 8 AA tandem repeats of P-H-G-G-G-W-G-Q. Positions 52 to 94 (QGGGWGQPHGGGWGQPHGGGWGQPHGGGWGQPHGGGWGQGGGT) are enriched in gly residues. Residues histidine 60, glycine 61, glycine 62, histidine 68, glycine 69, glycine 70, histidine 76, glycine 77, glycine 78, histidine 84, glycine 85, and glycine 86 each contribute to the Cu(2+) site. Cysteine 178 and cysteine 213 are disulfide-bonded. 2 N-linked (GlcNAc...) asparagine glycosylation sites follow: asparagine 180 and asparagine 196. Residue serine 229 is the site of GPI-anchor amidated serine attachment. The propeptide at 230–252 (SMVLFSSPPVILLISFLIFLIVG) is removed in mature form.

It belongs to the prion family. Monomer and homodimer. Has a tendency to aggregate into amyloid fibrils containing a cross-beta spine, formed by a steric zipper of superposed beta-strands. Soluble oligomers may represent an intermediate stage on the path to fibril formation. Copper binding may promote oligomerization. Interacts with GRB2, APP, ERI3/PRNPIP and SYN1. Mislocalized cytosolically exposed PrP interacts with MGRN1; this interaction alters MGRN1 subcellular location and causes lysosomal enlargement. Interacts with APP. Interacts with KIAA1191. Interacts with ADGRG6.

Its subcellular location is the cell membrane. The protein resides in the golgi apparatus. Its function is as follows. Its primary physiological function is unclear. May play a role in neuronal development and synaptic plasticity. May be required for neuronal myelin sheath maintenance. May promote myelin homeostasis through acting as an agonist for ADGRG6 receptor. May play a role in iron uptake and iron homeostasis. Soluble oligomers are toxic to cultured neuroblastoma cells and induce apoptosis (in vitro). Association with GPC1 (via its heparan sulfate chains) targets PRNP to lipid rafts. Also provides Cu(2+) or Zn(2+) for the ascorbate-mediated GPC1 deaminase degradation of its heparan sulfate side chains. This is Major prion protein (PRNP) from Callithrix jacchus (White-tufted-ear marmoset).